The primary structure comprises 408 residues: MAEAAAAPALLTSAASAGKAPLPAFPENPPVGVWTRHVTCRYFIHGVCKEGINCRYSHDLATSRSAMICRYFQRGCCAYGDRCRYEHNKPLQEDPTGDTCTAPSESLPEPSGNINSKAAELAASELASGGPRAQDWVNAVEFVPGQLYSGRAPEAYTQGTVKPDEGREEPADPELKKQLCPYAAMGECRYGENCVYLHGDPCDMCGLQVLHPVDTCQRSQHIKSCIEAHEKDMELSFAVQRSKDIVCGICMEVVYEKTNPSERRFGILSNCSHSYCLKCIRKWRSAKQFESKIIKSCPECRITSNFIIPSEYWVEEKEEKHKLIHKYKEAMSSKSCRYFDEGRGTCPFGGNCFYRHAYPDGRIEEPQPRQKSGMSSRYRIPSPSAGIDFGSLTSERAETRLRTRKTKL.

2 C3H1-type zinc fingers span residues 34–61 (WTRH…HDLA) and 63–90 (SRSA…HNKP). 2 disordered regions span residues 90–114 (PLQE…SGNI) and 154–173 (EAYT…PADP). The segment covering 162 to 173 (KPDEGREEPADP) has biased composition (basic and acidic residues). The segment at 174-201 (ELKKQLCPYAAMGECRYGENCVYLHGDP) adopts a C3H1-type 3 zinc-finger fold. A makorin-type Cys-His region spans residues 202–229 (CDMCGLQVLHPVDTCQRSQHIKSCIEAH). The RING-type zinc finger occupies 247–301 (CGICMEVVYEKTNPSERRFGILSNCSHSYCLKCIRKWRSAKQFESKIIKSCPECR). The C3H1-type 4 zinc finger occupies 330 to 359 (AMSSKSCRYFDEGRGTCPFGGNCFYRHAYP). Residues 363–408 (IEEPQPRQKSGMSSRYRIPSPSAGIDFGSLTSERAETRLRTRKTKL) are disordered.

The catalysed reaction is S-ubiquitinyl-[E2 ubiquitin-conjugating enzyme]-L-cysteine + [acceptor protein]-L-lysine = [E2 ubiquitin-conjugating enzyme]-L-cysteine + N(6)-ubiquitinyl-[acceptor protein]-L-lysine.. It functions in the pathway protein modification; protein ubiquitination. E3 ubiquitin ligase catalyzing the covalent attachment of ubiquitin moieties onto substrate proteins. This is Probable E3 ubiquitin-protein ligase makorin-1 (mkrn1) from Xenopus laevis (African clawed frog).